Consider the following 147-residue polypeptide: uncharacterized protein (147 aa).

This is an uncharacterized protein from Bacillus subtilis (strain 168).